We begin with the raw amino-acid sequence, 709 residues long: Mucin-20 (709 aa).

An N-terminal signal peptide occupies residues 1 to 25 (MGCLWGLALPLFFFCWEVGVSGSSA). The span at 57–69 (TQTLSAETSSRAS) shows a compositional bias: polar residues. Disordered regions lie at residues 57-92 (TQTL…ARET) and 170-403 (KGLS…WSPG). Residues 78-92 (AETRGAKRISPARET) are compositionally biased toward basic and acidic residues. Composition is skewed to low complexity over residues 173–182 (SSESSASSDS), 190–199 (SRASESSASS), 209–218 (SRASESSASS), 228–237 (SRASESSASS), 247–256 (SRASESSASS), 266–275 (SRASESSASS), 285–294 (SRASESSASS), 304–313 (SRASESSASS), 323–332 (SRASESSASS), 342–351 (SRASESSASS), 361–370 (SRASESSASS), and 380–389 (SRASESSASS). Tandem repeats lie at residues 173–192 (SSES…PSRA), 193–211 (SESS…PSRA), 212–230 (SESS…PSRA), 231–249 (SESS…PSRA), 250–268 (SESS…PSRA), 269–287 (SESS…PSRA), 288–306 (SESS…PSRA), 307–325 (SESS…PSRA), 326–344 (SESS…PSRA), 345–363 (SESS…PSRA), and 364–382 (SESS…PSRA). The segment at 173-400 (SSESSASSDS…GPHPVITPSW (228 aa)) is 12 X 20 AA approximate tandem repeats of S-S-E-S-S-A-S-S-D-S-P-H-P-V-I-T-P-S-R-A. The 12; approximate repeat unit spans residues 383–400 (SESSASSDGPHPVITPSW). Asn423 carries an N-linked (GlcNAc...) asparagine glycan. Disordered stretches follow at residues 434-515 (SSIP…APGA) and 583-657 (NFTP…VSAG). Positions 450–656 (VKASSTSDPP…RTRPTTDVSA (207 aa)) are involved in oligomerization. Residues 474–489 (VTASAETLSTAGTTES) are compositionally biased toward polar residues. Residues 613–652 (TTTNSSRGTNSTLAKITTSAKTTMKPPTATPTTARTRPTT) are compositionally biased toward low complexity. N-linked (GlcNAc...) asparagine glycans are attached at residues Asn616 and Asn622. Residues 657 to 709 (GENGGFLLLRLSVASPEDLTDPRVAERLMQQLHRELHAHAPHFQVSLLRVRRG) form an interaction with MET region.

In terms of assembly, interacts with MET; oligomerization increases affinity for MET. As to expression, highly expressed in kidney, moderately in placenta, lung, prostate, liver, and digestive system. In the kidney, localized in the proximal tubules but not in the glomerulus or distal tubules. Detected in most of the male urogenital tract epithelia, with the exception of epididymis.

It is found in the secreted. It localises to the apical cell membrane. Its subcellular location is the basolateral cell membrane. The protein localises to the cell projection. The protein resides in the microvillus membrane. May regulate MET signaling cascade. Seems to decrease hepatocyte growth factor (HGF)-induced transient MAPK activation. Blocks GRB2 recruitment to MET thus suppressing the GRB2-RAS pathway. Inhibits HGF-induced proliferation of MMP1 and MMP9 expression. The sequence is that of Mucin-20 (MUC20) from Homo sapiens (Human).